Here is a 213-residue protein sequence, read N- to C-terminus: DELTA-actitoxin-Aas1a (213 aa).

An N-terminal signal peptide occupies residues 1 to 19 (MSRLIIAFIVVTMVCSAIA). Residues 20–34 (LPKKKVEPLEKDEKR) constitute a propeptide that is removed on maturation. Residues 37–46 (AVAGAVIEGG) are plays an important role in the hemolytic activity. The segment at 45–64 (GGNLVMSVLDRILEAIGDVN) is N-terminal region. Positions 88, 121, 139, 141, 167, 171, and 172 each coordinate phosphocholine. Residues 139–154 (SIPYDYNLYSNWWNVK) form a trp-rich region, which is important for the binding to lipid membrane region. The Cell attachment site, crucial for protein stability motif lies at 178-180 (KGD).

It belongs to the actinoporin family. Sea anemone subfamily. As to quaternary structure, octamer or nonamer in membranes. Monomer in the soluble state.

The protein resides in the secreted. Its subcellular location is the nematocyst. It is found in the target cell membrane. Pore-forming protein that forms cation-selective hydrophilic pores of around 1 nm and causes cytolysis. Pore formation is a multi-step process that involves specific recognition of membrane sphingomyelin (but neither cholesterol nor phosphatidylcholine) using aromatic rich region and adjacent phosphocholine (POC) binding site, firm binding to the membrane (mainly driven by hydrophobic interactions) accompanied by the transfer of the N-terminal region to the lipid-water interface and finally pore formation after oligomerization of monomers. This protein shows potent hemolytic activity (EC(50)=8.8 ng/ml) that is specifically inhibited by sphingomyelin. Shows no phospholipase A2 activity, nor antimicrobial activity against the four bacteria tested. Is lethal to crayfish. The protein is DELTA-actitoxin-Aas1a of Anthopleura asiatica (Sea anemone).